Here is a 101-residue protein sequence, read N- to C-terminus: Small ribosomal subunit protein uS10 (101 aa).

The protein belongs to the universal ribosomal protein uS10 family. In terms of assembly, part of the 30S ribosomal subunit.

Its function is as follows. Involved in the binding of tRNA to the ribosomes. In Saccharopolyspora erythraea (strain ATCC 11635 / DSM 40517 / JCM 4748 / NBRC 13426 / NCIMB 8594 / NRRL 2338), this protein is Small ribosomal subunit protein uS10.